A 437-amino-acid chain; its full sequence is Adenylosuccinate synthetase (437 aa).

GTP contacts are provided by residues 12-18 and 40-42; these read GDEGKGK and GHT. D13 (proton acceptor) is an active-site residue. Positions 13 and 40 each coordinate Mg(2+). Residues 13–16, 38–41, T128, R142, Q223, T238, and R302 each bind IMP; these read DEGK and NAGH. H41 acts as the Proton donor in catalysis. A substrate-binding site is contributed by 298–304; it reads TTTGRRR. Residues R304, 330-332, and 412-414 each bind GTP; these read KLD and SLG.

It belongs to the adenylosuccinate synthetase family. In terms of assembly, homodimer. The cofactor is Mg(2+).

The protein localises to the cytoplasm. The enzyme catalyses IMP + L-aspartate + GTP = N(6)-(1,2-dicarboxyethyl)-AMP + GDP + phosphate + 2 H(+). Its pathway is purine metabolism; AMP biosynthesis via de novo pathway; AMP from IMP: step 1/2. In terms of biological role, plays an important role in the de novo pathway of purine nucleotide biosynthesis. Catalyzes the first committed step in the biosynthesis of AMP from IMP. The polypeptide is Adenylosuccinate synthetase (Synechococcus sp. (strain CC9311)).